The sequence spans 317 residues: tRNA dimethylallyltransferase (317 aa).

19-26 provides a ligand contact to ATP; it reads GPTASGKS. Residue 21–26 participates in substrate binding; it reads TASGKS. Positions 44–47 are interaction with substrate tRNA; the sequence is DSMQ.

The protein belongs to the IPP transferase family. In terms of assembly, monomer. Mg(2+) serves as cofactor.

It carries out the reaction adenosine(37) in tRNA + dimethylallyl diphosphate = N(6)-dimethylallyladenosine(37) in tRNA + diphosphate. Functionally, catalyzes the transfer of a dimethylallyl group onto the adenine at position 37 in tRNAs that read codons beginning with uridine, leading to the formation of N6-(dimethylallyl)adenosine (i(6)A). This Methylorubrum extorquens (strain PA1) (Methylobacterium extorquens) protein is tRNA dimethylallyltransferase.